Reading from the N-terminus, the 159-residue chain is 2-C-methyl-D-erythritol 2,4-cyclodiphosphate synthase (159 aa).

The a divalent metal cation site is built by Asp8 and His10. Residues 8-10 (DVH) and 34-35 (HS) contribute to the 4-CDP-2-C-methyl-D-erythritol 2-phosphate site. Residue His42 coordinates a divalent metal cation. 4-CDP-2-C-methyl-D-erythritol 2-phosphate is bound by residues 56–58 (DIG), 61–65 (FPDTD), 100–106 (AQAPKML), 132–135 (TTTE), Phe139, and Arg142.

It belongs to the IspF family. Homotrimer. Requires a divalent metal cation as cofactor.

It carries out the reaction 4-CDP-2-C-methyl-D-erythritol 2-phosphate = 2-C-methyl-D-erythritol 2,4-cyclic diphosphate + CMP. The protein operates within isoprenoid biosynthesis; isopentenyl diphosphate biosynthesis via DXP pathway; isopentenyl diphosphate from 1-deoxy-D-xylulose 5-phosphate: step 4/6. Functionally, involved in the biosynthesis of isopentenyl diphosphate (IPP) and dimethylallyl diphosphate (DMAPP), two major building blocks of isoprenoid compounds. Catalyzes the conversion of 4-diphosphocytidyl-2-C-methyl-D-erythritol 2-phosphate (CDP-ME2P) to 2-C-methyl-D-erythritol 2,4-cyclodiphosphate (ME-CPP) with a corresponding release of cytidine 5-monophosphate (CMP). The protein is 2-C-methyl-D-erythritol 2,4-cyclodiphosphate synthase of Salmonella typhimurium (strain LT2 / SGSC1412 / ATCC 700720).